We begin with the raw amino-acid sequence, 343 residues long: MSFVFPSWSTAFSPAFHEDAKAMLEGALNKGDKPPVIQGKIEVVELHMGEQPPTLTLLEIGDLSIDRFRGILRLGYQGDAWLEVRCRVQANPLSHNPHLTFSTLPLSTPLLASQPLLVPMTLRLSKLHLRAILILVVSASKGITLVFKNDPLQNVDVSSTFDSVEVIRGYLQQEIEGQLREMFREHLPGIIHRLSQKWFSGSGVGGKVEMPYRDMSPVPSYAPINEEVEEEENEENHGTSPGNEESFPPRHIGPGGITLPLNNSVSQLAALSYSAHTLSPYARGHEHIAVRSFPYLGKSGAGTGSSGRASLASSSVGEGDIKAKRKRIFRIGKSKEADEKSEA.

In terms of domain architecture, SMP-LTD spans 1–196 (MSFVFPSWST…LPGIIHRLSQ (196 aa)). 2 disordered regions span residues 227 to 255 (EVEEEENEENHGTSPGNEESFPPRHIGPG) and 300 to 325 (GAGTGSSGRASLASSSVGEGDIKAKR). A compositionally biased stretch (low complexity) spans 306–317 (SGRASLASSSVG).

Belongs to the MDM34 family. Component of the ER-mitochondria encounter structure (ERMES) or MDM complex, composed of MMM1, MDM10, MDM12 and MDM34.

The protein localises to the mitochondrion outer membrane. In terms of biological role, component of the ERMES/MDM complex, which serves as a molecular tether to connect the endoplasmic reticulum (ER) and mitochondria. Components of this complex are involved in the control of mitochondrial shape and protein biogenesis, and function in nonvesicular lipid trafficking between the ER and mitochondria. MDM34 is required for the interaction of the ER-resident membrane protein MMM1 and the outer mitochondrial membrane-resident beta-barrel protein MDM10. The chain is Mitochondrial distribution and morphology protein 34 from Cryptococcus neoformans var. neoformans serotype D (strain B-3501A) (Filobasidiella neoformans).